The chain runs to 949 residues: Glutamate receptor ionotropic, kainate 1 (949 aa).

The N-terminal stretch at 1–30 (MERSTVLIQPGLWTRDTSWTLLYFLCYILP) is a signal peptide. Residues 31-576 (QTSPQVLRIG…VFSFLNPLSP (546 aa)) lie on the Extracellular side of the membrane. N-linked (GlcNAc...) asparagine glycosylation is found at asparagine 68, asparagine 74, asparagine 276, asparagine 379, asparagine 428, asparagine 439, and asparagine 446. Proline 531, threonine 533, and arginine 538 together coordinate L-glutamate. Asparagine 561 is a glycosylation site (N-linked (GlcNAc...) asparagine). A helical membrane pass occupies residues 577 to 597 (DIWMYVLLACLGVSCVLFVIA). The Cytoplasmic portion of the chain corresponds to 598–653 (RFTPYEWYNPHPCNPDSDVVENNFTLLNSFWFGVGALMQQGSELMPKALSTRIVGG). Residues 654-674 (IWWFFTLIIISSYTANLAAFL) form a helical membrane-spanning segment. Residues 675 to 834 (TVERMESPID…KEASALGVEN (160 aa)) are Extracellular-facing. L-glutamate contacts are provided by serine 704 and threonine 705. At serine 725 the chain carries Phosphoserine; by PKC. Glutamate 753 serves as a coordination point for L-glutamate. Phosphothreonine; by PKC is present on threonine 761. A disulfide bridge links cysteine 765 with cysteine 819. An N-linked (GlcNAc...) asparagine glycan is attached at asparagine 766. Residues 835 to 855 (IGGIFIVLAAGLVLSVFVAIG) form a helical membrane-spanning segment. At 856-949 (EFLYKSRKNN…RRTQRKETVA (94 aa)) the chain is on the cytoplasmic side.

Belongs to the glutamate-gated ion channel (TC 1.A.10.1) family. GRIK1 subfamily. In terms of assembly, homotetramer or heterotetramer of pore-forming glutamate receptor subunits. Tetramers may be formed by the dimerization of dimers. Can form functional heteromeric receptors with GRIK4 and GRIK5. Interacts with KLHL17. In terms of tissue distribution, expressed in the olfactory bulb (at protein level). Expressed in subsets of neurons throughout the developing and adult central and peripheral nervous systems. In the CNS principally in the medial amygdaloid nuclei, medial habenulae, pyriform and cingulate cortices, and Purkinje cell layer. Also highly expressed in embryonic and adult dorsal root ganglia. Expressed at high levels in the trigeminal ganglion neurons.

Its subcellular location is the cell membrane. It is found in the postsynaptic cell membrane. It catalyses the reaction Ca(2+)(in) = Ca(2+)(out). Functionally, ionotropic glutamate receptor that functions as a cation-permeable ligand-gated ion channel, gated by L-glutamate and the glutamatergic agonist kainic acid. L-glutamate acts as an excitatory neurotransmitter at many synapses in the central nervous system. Binding of the excitatory neurotransmitter L-glutamate induces a conformation change, leading to the opening of the cation channel, and thereby converts the chemical signal to an electrical impulse. The receptor then desensitizes rapidly and enters a transient inactive state, characterized by the presence of bound agonist. The polypeptide is Glutamate receptor ionotropic, kainate 1 (Grik1) (Rattus norvegicus (Rat)).